Consider the following 485-residue polypeptide: CCA-adding enzyme (485 aa).

Ser-53 and Arg-56 together coordinate ATP. CTP is bound by residues Ser-53 and Arg-56. Asp-65, Asp-67, and Asp-124 together coordinate Mg(2+). His-146, Lys-164, and Tyr-173 together coordinate ATP. CTP is bound by residues His-146, Lys-164, and Tyr-173.

Belongs to the tRNA nucleotidyltransferase/poly(A) polymerase family. Archaeal CCA-adding enzyme subfamily. Homodimer. Mg(2+) is required as a cofactor.

It carries out the reaction a tRNA precursor + 2 CTP + ATP = a tRNA with a 3' CCA end + 3 diphosphate. The catalysed reaction is a tRNA with a 3' CCA end + 2 CTP + ATP = a tRNA with a 3' CCACCA end + 3 diphosphate. Its function is as follows. Catalyzes the addition and repair of the essential 3'-terminal CCA sequence in tRNAs without using a nucleic acid template. Adds these three nucleotides in the order of C, C, and A to the tRNA nucleotide-73, using CTP and ATP as substrates and producing inorganic pyrophosphate. tRNA 3'-terminal CCA addition is required both for tRNA processing and repair. Also involved in tRNA surveillance by mediating tandem CCA addition to generate a CCACCA at the 3' terminus of unstable tRNAs. While stable tRNAs receive only 3'-terminal CCA, unstable tRNAs are marked with CCACCA and rapidly degraded. This is CCA-adding enzyme from Methanopyrus kandleri (strain AV19 / DSM 6324 / JCM 9639 / NBRC 100938).